The primary structure comprises 97 residues: uncharacterized protein (97 aa).

The protein to M.thermoautotrophicum MTH1236.

This is an uncharacterized protein from Methanocaldococcus jannaschii (strain ATCC 43067 / DSM 2661 / JAL-1 / JCM 10045 / NBRC 100440) (Methanococcus jannaschii).